Here is a 2742-residue protein sequence, read N- to C-terminus: Polycystin-1-like protein 1 (2742 aa).

Residues 1–1602 (MFCLWIFSLA…LDQFLSVSRD (1602 aa)) are Extracellular-facing. 5 N-linked (GlcNAc...) asparagine glycosylation sites follow: Asn-35, Asn-133, Asn-149, Asn-220, and Asn-267. 2 consecutive PKD domains span residues 286-372 (AVRI…VKLN) and 370-454 (KLNR…PCQP). N-linked (GlcNAc...) asparagine glycans are attached at residues Asn-383, Asn-397, Asn-486, Asn-545, Asn-693, Asn-709, and Asn-735. The 887-residue stretch at 452–1338 (CQPPPVKNLG…ITFFLPASLI (887 aa)) folds into the REJ domain. Disordered regions lie at residues 767–829 (SPSR…QSDP) and 846–908 (DLRG…RPSV). Over residues 779–799 (SELTDSPVSSVTVGFSGSESF) the composition is skewed to polar residues. The segment covering 880-893 (SFPSDSDSFSHSSS) has biased composition (low complexity). 7 N-linked (GlcNAc...) asparagine glycosylation sites follow: Asn-1080, Asn-1101, Asn-1201, Asn-1318, Asn-1437, Asn-1490, and Asn-1568. Residues 1436–1587 (HNFSITQEHL…KVLQQQIQSS (152 aa)) enclose the GAIN-B domain. 2 cysteine pairs are disulfide-bonded: Cys-1541-Cys-1569 and Cys-1556-Cys-1571. Residues 1541-1587 (CLSWEDQQGSWTQNGCRAQTNDKTSAVNCSCHHLKPLKVLQQQIQSS) are GPS. Residues 1603–1623 (LTVVFVLLLCVSLNIPVLVWC) traverse the membrane as a helical segment. The Cytoplasmic segment spans residues 1624–1812 (KKTDATSEEN…SPHLFTRAQR (189 aa)). Residues 1648–1769 (HFYAVTVHTG…GDGQVERMLR (122 aa)) enclose the PLAT domain. Residues 1813–1833 (LCVCLLLFLGYACVNIIITHQ) form a helical membrane-spanning segment. Residues 1834 to 1851 (RDDQLPFDLGVIDVTSVS) are Extracellular-facing. Residues 1852-1872 (IATGLVSVVAVLPVAMVISFL) form a helical membrane-spanning segment. Over 1873–2005 (FRVKSGRMTL…YRLASLLYHC (133 aa)) the chain is Cytoplasmic. The chain crosses the membrane as a helical span at residues 2006–2026 (VAWTLCLLFCLSCLILSAVLG). At 2027–2040 (TRLNSGKILHWIHS) the chain is on the extracellular side. A helical membrane pass occupies residues 2041-2061 (LFVSLTFCFFVIHPATILVLA). The Cytoplasmic segment spans residues 2062–2151 (AVVSWRFKRS…KQAVIHKMLR (90 aa)). A helical membrane pass occupies residues 2152 to 2172 (DLCLCGSMFFLMVCITYGSPV). The Extracellular portion of the chain corresponds to 2173–2344 (DEHYPLNAAF…QSVRLYHSPS (172 aa)). Asn-2218 is a glycosylation site (N-linked (GlcNAc...) asparagine). Residues 2345–2365 (MLDYTVMVWQLLFLLLSLVNL) traverse the membrane as a helical segment. Topologically, residues 2366–2378 (YHQTSTAAQHGLM) are cytoplasmic. Residues 2379-2401 (GYWKTTSISVEVSLVIVSLVYYV) traverse the membrane as a helical segment. The Extracellular segment spans residues 2402 to 2442 (HYVYHPTMVMEVAEQLRRNHREHVDVSTLANSEQFSRTLRG). A helical membrane pass occupies residues 2443–2463 (IILFLLAVKCVTVVRLNRILA). Residues 2464–2467 (PSMP) are Cytoplasmic-facing. The helical transmembrane segment at 2468 to 2488 (LLSLSSLLWPAISGLLLLSIF) threads the bilayer. The Extracellular portion of the chain corresponds to 2489-2528 (SCMGRLLYIERTFHSIQTVLWHFWSLRKSRDLISLWRDFY). Residues 2529–2549 (YFGLLYASSAMLTTMVFAVMI) form a helical membrane-spanning segment. The Cytoplasmic segment spans residues 2550 to 2742 (RKAKRSPSTK…LVHHEQGTKN (193 aa)).

The protein belongs to the polycystin family. In terms of assembly, heterodimer. Interacts with pkd2 to form a calcium channel. Interacts with pkd2l1 to form ciliary calcium channel. As to expression, expressed in Kupffer's vesicle, an organ equivalent to the node.

It localises to the cell projection. Its subcellular location is the cilium membrane. Functionally, component of a calcium-permeant ion channel formed by PKD1L2 and PKD1L1 in primary cilia, where it controls cilium calcium concentration, without affecting cytoplasmic calcium concentration, and regulates sonic hedgehog/SHH signaling and GLI2 transcription. The PKD1L1:PKD2L1 channel complex is mechanosensitive only at high pressures and is highly temperature sensitive. Also involved in left/right axis specification downstream of nodal flow by forming a complex with PKD2 in cilia to facilitate flow detection in left/right patterning. The sequence is that of Polycystin-1-like protein 1 from Oryzias latipes (Japanese rice fish).